The primary structure comprises 160 residues: Ribosomal RNA large subunit methyltransferase H (160 aa).

S-adenosyl-L-methionine contacts are provided by residues leucine 78, glycine 109, and 128–133; that span reads LSNLTL.

The protein belongs to the RNA methyltransferase RlmH family. As to quaternary structure, homodimer.

The protein resides in the cytoplasm. The enzyme catalyses pseudouridine(1915) in 23S rRNA + S-adenosyl-L-methionine = N(3)-methylpseudouridine(1915) in 23S rRNA + S-adenosyl-L-homocysteine + H(+). Functionally, specifically methylates the pseudouridine at position 1915 (m3Psi1915) in 23S rRNA. This is Ribosomal RNA large subunit methyltransferase H from Alcanivorax borkumensis (strain ATCC 700651 / DSM 11573 / NCIMB 13689 / SK2).